The following is a 315-amino-acid chain: Voltage-dependent calcium channel gamma-3 subunit (315 aa).

4 helical membrane passes run 8–28 (IQML…TIAV), 104–124 (SSVF…CVAA), 135–155 (ILSA…GIIV), and 181–201 (FGAF…HIYI). The segment at 232 to 253 (RRRSSSRSTEPRSRDLSPISKG) is disordered. Residue Ser-248 is modified to Phosphoserine.

It belongs to the PMP-22/EMP/MP20 family. CACNG subfamily. In terms of assembly, the L-type calcium channel is composed of five subunits: alpha-1, alpha-2/delta, beta and gamma. Acts as an auxiliary subunit for AMPA-selective glutamate receptors (AMPARs). Found in a complex with GRIA1, GRIA2, GRIA3, GRIA4, CNIH2, CNIH3, CACNG2, CACNG4, CACNG5, CACNG7 and CACNG8. Interacts with AP4M1 and GRIA1; associates GRIA1 with the adaptor protein complex 4 (AP-4) to target GRIA1 to the somatodendritic compartment of neurons.

It is found in the membrane. Regulates the trafficking to the somatodendritic compartment and gating properties of AMPA-selective glutamate receptors (AMPARs). Promotes their targeting to the cell membrane and synapses and modulates their gating properties by slowing their rates of activation, deactivation and desensitization. Does not show subunit-specific AMPA receptor regulation and regulates all AMPAR subunits. Thought to stabilize the calcium channel in an inactivated (closed) state. The chain is Voltage-dependent calcium channel gamma-3 subunit (Cacng3) from Mus musculus (Mouse).